The sequence spans 296 residues: MNSLLRQGLRLGCCLPAVQQQIHTTAVHRTFWEREKKSGYKTKLPEPSKKQMIMDGLRDLKEEMKLWRQEVKEQFESDPILVFRPGETDVVFDFKAPDVLDKWTVTTDADHGEGKSTATLELSAAGAGLFHGQVNSDHTKDGIIKRTGYANIRTKRVRKSFKRETTYDWTQYNMLVMKVRGDGRSYLINLHTEGYFDLMWNDIYHYVLYTRGGPHWQIAKIPFSKFFLSSKGRVQDRQGAIPLNRVTHFGFSVAAKKGMDGPFGLEIDYVGLEYDPSHREEFAYEMYQTPKYIVAT.

The transit peptide at 1-29 (MNSLLRQGLRLGCCLPAVQQQIHTTAVHR) directs the protein to the mitochondrion.

The protein belongs to the CIA30 family. As to quaternary structure, associates with mitochondrial complex I assembly intermediates during its biogenesis.

It localises to the mitochondrion. Chaperone protein involved in the assembly of the mitochondrial NADH:ubiquinone oxidoreductase complex (complex I). In Drosophila melanogaster (Fruit fly), this protein is Complex I intermediate-associated protein 30, mitochondrial.